Here is a 378-residue protein sequence, read N- to C-terminus: Chaperone protein DnaJ (378 aa).

One can recognise a J domain in the interval 5–70 (DYYEVLGLQK…EKRAMYDQYG (66 aa)). Residues 135–213 (GVKKDIRIRT…CHGDGRVEKT (79 aa)) form a CR-type zinc finger. Residues cysteine 148, cysteine 151, cysteine 165, cysteine 168, cysteine 187, cysteine 190, cysteine 201, and cysteine 204 each contribute to the Zn(2+) site. 4 CXXCXGXG motif repeats span residues 148–155 (CDTCHGSG), 165–172 (CPHCHGSG), 187–194 (CPSCHGTG), and 201–208 (CKSCHGDG).

This sequence belongs to the DnaJ family. As to quaternary structure, homodimer. It depends on Zn(2+) as a cofactor.

It localises to the cytoplasm. Functionally, participates actively in the response to hyperosmotic and heat shock by preventing the aggregation of stress-denatured proteins and by disaggregating proteins, also in an autonomous, DnaK-independent fashion. Unfolded proteins bind initially to DnaJ; upon interaction with the DnaJ-bound protein, DnaK hydrolyzes its bound ATP, resulting in the formation of a stable complex. GrpE releases ADP from DnaK; ATP binding to DnaK triggers the release of the substrate protein, thus completing the reaction cycle. Several rounds of ATP-dependent interactions between DnaJ, DnaK and GrpE are required for fully efficient folding. Also involved, together with DnaK and GrpE, in the DNA replication of plasmids through activation of initiation proteins. The polypeptide is Chaperone protein DnaJ (Glaesserella parasuis serovar 5 (strain SH0165) (Haemophilus parasuis)).